The chain runs to 136 residues: Large ribosomal subunit protein uL16 (136 aa).

It belongs to the universal ribosomal protein uL16 family. As to quaternary structure, part of the 50S ribosomal subunit.

In terms of biological role, binds 23S rRNA and is also seen to make contacts with the A and possibly P site tRNAs. The chain is Large ribosomal subunit protein uL16 from Pasteurella multocida (strain Pm70).